An 811-amino-acid polypeptide reads, in one-letter code: Transmembrane protease serine 6 (811 aa).

The Cytoplasmic portion of the chain corresponds to 1 to 55; it reads MLLLFHSKRMPVAEAPQVAGGQGDGGDGEEAEPEGMFKACEDSKRKARGYLRLVP. A helical; Signal-anchor for type II membrane protein transmembrane segment spans residues 56-76; sequence LFVLLALLVLASAGVLLWYFL. The Extracellular portion of the chain corresponds to 77–811; it reads GYKAEVMVSQ…VISWIQQVVT (735 aa). The SEA domain maps to 84-209; the sequence is VSQVYSGSLR…EGLVILEASV (126 aa). N-linked (GlcNAc...) asparagine glycans are attached at residues asparagine 136, asparagine 184, asparagine 216, asparagine 338, asparagine 433, and asparagine 453. CUB domains lie at 213–336 and 335–452; these read AALN…QACE and CEVN…YGLY. Cysteine 335 and cysteine 366 are disulfide-bonded. LDL-receptor class A domains lie at 457–489, 490–526, and 530–567; these read PCPG…ERNC, VCRA…EQCQ, and PCGT…EHCD. Disulfide bonds link cysteine 458/cysteine 470, cysteine 464/cysteine 480, cysteine 474/cysteine 489, cysteine 491/cysteine 503, cysteine 497/cysteine 516, cysteine 510/cysteine 525, cysteine 531/cysteine 543, cysteine 538/cysteine 557, cysteine 551/cysteine 566, and cysteine 602/cysteine 618. Asparagine 518 carries N-linked (GlcNAc...) asparagine glycosylation. Positions 577 to 811 constitute a Peptidase S1 domain; it reads IVGGAVSSEG…VISWIQQVVT (235 aa). Residues histidine 617 and aspartate 668 each act as charge relay system in the active site. 3 cysteine pairs are disulfide-bonded: cysteine 702/cysteine 768, cysteine 733/cysteine 747, and cysteine 758/cysteine 787. Serine 762 (charge relay system) is an active-site residue.

The protein belongs to the peptidase S1 family. Interacts with HJV. In terms of processing, the single-chain zymogen undergoes autoproteolytic processing. This results in TMPRSS6 shedding from the cell surface and conversion into an activated two-chains form which is released extracellularly. The process involves a trans-activation mechanism that requires TMPRSS6 oligomerization.

It is found in the cell membrane. Functionally, membrane-bound serine protease. Through the cleavage of cell surface hemojuvelin (HJV), a regulator of the expression of the iron absorption-regulating hormone hepicidin/HAMP, plays a role in iron homeostasis. In Homo sapiens (Human), this protein is Transmembrane protease serine 6 (TMPRSS6).